The chain runs to 160 residues: SsrA-binding protein (160 aa).

Belongs to the SmpB family.

It localises to the cytoplasm. In terms of biological role, required for rescue of stalled ribosomes mediated by trans-translation. Binds to transfer-messenger RNA (tmRNA), required for stable association of tmRNA with ribosomes. tmRNA and SmpB together mimic tRNA shape, replacing the anticodon stem-loop with SmpB. tmRNA is encoded by the ssrA gene; the 2 termini fold to resemble tRNA(Ala) and it encodes a 'tag peptide', a short internal open reading frame. During trans-translation Ala-aminoacylated tmRNA acts like a tRNA, entering the A-site of stalled ribosomes, displacing the stalled mRNA. The ribosome then switches to translate the ORF on the tmRNA; the nascent peptide is terminated with the 'tag peptide' encoded by the tmRNA and targeted for degradation. The ribosome is freed to recommence translation, which seems to be the essential function of trans-translation. The protein is SsrA-binding protein of Photorhabdus laumondii subsp. laumondii (strain DSM 15139 / CIP 105565 / TT01) (Photorhabdus luminescens subsp. laumondii).